The sequence spans 72 residues: Small ribosomal subunit protein bS18c (72 aa).

The protein belongs to the bacterial ribosomal protein bS18 family. In terms of assembly, part of the 30S ribosomal subunit.

It is found in the plastid. The protein resides in the chloroplast. The polypeptide is Small ribosomal subunit protein bS18c (Emiliania huxleyi (Coccolithophore)).